Consider the following 578-residue polypeptide: Tetratricopeptide repeat protein ttc-39B (578 aa).

TPR repeat units lie at residues 297–330 (AIML…QDVY), 481–514 (CLYY…ESSI), and 522–554 (PNAT…YKSY).

The chain is Tetratricopeptide repeat protein ttc-39B from Caenorhabditis elegans.